Reading from the N-terminus, the 940-residue chain is Protein translocase subunit SecA (940 aa).

Residues Gln85, 103-107 (GEGKT), and Asp505 contribute to the ATP site. Residues 851 to 940 (PVQDGAERPS…KGGGGRRRKK (90 aa)) are disordered. The segment covering 855-865 (GAERPSLEKEG) has biased composition (basic and acidic residues). Residues 928 to 940 (RRRKGGGGRRRKK) are compositionally biased toward basic residues.

It belongs to the SecA family. In terms of assembly, monomer and homodimer. Part of the essential Sec protein translocation apparatus which comprises SecA, SecYEG and auxiliary proteins SecDF. Other proteins may also be involved.

The protein resides in the cell membrane. It is found in the cytoplasm. The enzyme catalyses ATP + H2O + cellular proteinSide 1 = ADP + phosphate + cellular proteinSide 2.. Part of the Sec protein translocase complex. Interacts with the SecYEG preprotein conducting channel. Has a central role in coupling the hydrolysis of ATP to the transfer of proteins into and across the cell membrane, serving as an ATP-driven molecular motor driving the stepwise translocation of polypeptide chains across the membrane. This chain is Protein translocase subunit SecA, found in Streptomyces griseus.